Consider the following 317-residue polypeptide: Phosphatidylglycerol--prolipoprotein diacylglyceryl transferase 2 (317 aa).

The next 4 membrane-spanning stretches (helical) occupy residues 19 to 39, 51 to 71, 93 to 113, and 120 to 140; these read IPLRAYAFCIILGVFAAVWLG, GVIADVTLWAVPFGLVGGRLY, VWEGGLGIWGAIALGAVGAWI, and IPLPAFADAVAPGIVLAQAIG. Arg-141 lines the a 1,2-diacyl-sn-glycero-3-phospho-(1'-sn-glycerol) pocket. Helical transmembrane passes span 180-200, 211-230, and 241-261; these read PTFLYESLWNIGVAALILWAA, FALYVAAYTVGRFGTEYLRI, and LNNWTSVLVFLGAVACLVVSA. The disordered stretch occupies residues 275–317; that stretch reads GAGADGRTDDPRPADASVGLASGPPGNSTPRRATESWNVRNRS. Positions 299–317 are enriched in polar residues; that stretch reads PGNSTPRRATESWNVRNRS.

This sequence belongs to the Lgt family.

Its subcellular location is the cell membrane. The enzyme catalyses L-cysteinyl-[prolipoprotein] + a 1,2-diacyl-sn-glycero-3-phospho-(1'-sn-glycerol) = an S-1,2-diacyl-sn-glyceryl-L-cysteinyl-[prolipoprotein] + sn-glycerol 1-phosphate + H(+). The protein operates within protein modification; lipoprotein biosynthesis (diacylglyceryl transfer). Its function is as follows. Catalyzes the transfer of the diacylglyceryl group from phosphatidylglycerol to the sulfhydryl group of the N-terminal cysteine of a prolipoprotein, the first step in the formation of mature lipoproteins. In Streptomyces coelicolor (strain ATCC BAA-471 / A3(2) / M145), this protein is Phosphatidylglycerol--prolipoprotein diacylglyceryl transferase 2.